Reading from the N-terminus, the 193-residue chain is ATP synthase subunit b 1 (193 aa).

Residues 9 to 28 (QEADHTAGETHTETGVAEGG) are disordered. The segment covering 10 to 20 (EADHTAGETHT) has biased composition (basic and acidic residues). The helical transmembrane segment at 40-59 (TYPSQLLWLAITFGLFYLFL) threads the bilayer.

It belongs to the ATPase B chain family. In terms of assembly, F-type ATPases have 2 components, F(1) - the catalytic core - and F(0) - the membrane proton channel. F(1) has five subunits: alpha(3), beta(3), gamma(1), delta(1), epsilon(1). F(0) has three main subunits: a(1), b(2) and c(10-14). The alpha and beta chains form an alternating ring which encloses part of the gamma chain. F(1) is attached to F(0) by a central stalk formed by the gamma and epsilon chains, while a peripheral stalk is formed by the delta and b chains.

It is found in the cell inner membrane. In terms of biological role, f(1)F(0) ATP synthase produces ATP from ADP in the presence of a proton or sodium gradient. F-type ATPases consist of two structural domains, F(1) containing the extramembraneous catalytic core and F(0) containing the membrane proton channel, linked together by a central stalk and a peripheral stalk. During catalysis, ATP synthesis in the catalytic domain of F(1) is coupled via a rotary mechanism of the central stalk subunits to proton translocation. Functionally, component of the F(0) channel, it forms part of the peripheral stalk, linking F(1) to F(0). The sequence is that of ATP synthase subunit b 1 from Chelativorans sp. (strain BNC1).